A 69-amino-acid chain; its full sequence is Alpha-conotoxin SrIA/SrIB (69 aa).

The N-terminal stretch at 1–21 (MGMRMMFTVFLLVVLATTVVS) is a signal peptide. Positions 22–48 (FTSDSAFDSRNVAANDKVSDMIALTAR) are excised as a propeptide. Intrachain disulfides connect Cys51-Cys57 and Cys52-Cys65. Positions 53–55 (SRP) are ser-Xaa-Pro motif, crucial for potent interaction with nAChR. Pro55 bears the 4-hydroxyproline; in form Sr1A and Sr1B mark. Residue Glu60 is modified to 4-carboxyglutamate; in form Sr1A. The residue at position 63 (Glu63) is a 4-carboxyglutamate; in form Sr1A and Sr1B. Gly66 is modified (glycine amide; in form Sr1A and Sr1B).

The protein belongs to the conotoxin A superfamily. Occurs in 2 forms which differ in the post-translational modification of Glu-60. In form SrA1 Glu-60 is 4-carboxyglutamate while in form SrA2 Glu-60 is unmodified. Expressed by the venom duct.

Its subcellular location is the secreted. Alpha-conotoxins act on postsynaptic membranes, they bind to the nicotinic acetylcholine receptors (nAChR) and thus inhibit them. Has weak blocking effects on muscle nAChR composed of alpha-1/beta-1/gamma/delta subunits and the central nervous system nAChR composed of alpha-4/beta-2 subunits. Does not detectably affect the peripheral nervous system nAChR composed of alpha-3/beta-4 subunits. Low toxin concentrations potentiate currents in muscle nAChR composed of alpha-1/beta-1/gamma/delta subunits and central nervous system nAChR composed of alpha-4/beta-2 subunits, but not the peripheral nervous system nAChR composed of alpha-3/beta-4 subunits. In Conus spurius (Alphabet cone), this protein is Alpha-conotoxin SrIA/SrIB.